Consider the following 474-residue polypeptide: Cysteine--tRNA ligase (474 aa).

Cys-27 is a Zn(2+) binding site. The 'HIGH' region motif lies at 29–39 (ITPYDHMHVGH). Cys-213, His-238, and Glu-242 together coordinate Zn(2+). A 'KMSKS' region motif is present at residues 271-275 (KMSKS). Residue Lys-274 coordinates ATP.

The protein belongs to the class-I aminoacyl-tRNA synthetase family. The cofactor is Zn(2+).

The protein resides in the cytoplasm. It carries out the reaction tRNA(Cys) + L-cysteine + ATP = L-cysteinyl-tRNA(Cys) + AMP + diphosphate. This chain is Cysteine--tRNA ligase, found in Pyrobaculum neutrophilum (strain DSM 2338 / JCM 9278 / NBRC 100436 / V24Sta) (Thermoproteus neutrophilus).